A 329-amino-acid chain; its full sequence is MQDFLQLTLSGGQPEQKEGRNGLLRWRWLNVGILELTPLHSVPRALVVSSGIHGNETAPVEIVEQLVNALLRGELALQARLLVIYGNPAALRLNRRYVHGDMNRMFGGRWQQYEDCPEARRAWILEQAMDNFWQAGDYEEVRWHLDLHTAIRGSYHAQFGVLPQRMTPWPEDFMHWLASAGLEALVFHRATGGTFTNYSSRHFQAASCTLELGTALPFGHNDLTQFAAVRLALRQLIAGGENIPAAAQPRRYRVSQQITRRSDRFVLHMSDEVLNFTAFPQGTLLAEDGEDRVYVQQAREYVLFPNPNVATGLRAGLMLVEDNVHNKAL.

3 residues coordinate Zn(2+): His53, Glu56, and His148. Residue Glu211 is part of the active site.

This sequence belongs to the AspA/AstE family. Succinylglutamate desuccinylase subfamily. Zn(2+) serves as cofactor.

It catalyses the reaction N-succinyl-L-glutamate + H2O = L-glutamate + succinate. The protein operates within amino-acid degradation; L-arginine degradation via AST pathway; L-glutamate and succinate from L-arginine: step 5/5. In terms of biological role, transforms N(2)-succinylglutamate into succinate and glutamate. The sequence is that of Succinylglutamate desuccinylase from Erwinia tasmaniensis (strain DSM 17950 / CFBP 7177 / CIP 109463 / NCPPB 4357 / Et1/99).